Reading from the N-terminus, the 791-residue chain is Protein Rf1, mitochondrial (791 aa).

Residues 1–27 (MARRAASRAVGALRSDGSIQGRGGRAG) constitute a mitochondrion transit peptide. The disordered stretch occupies residues 1–31 (MARRAASRAVGALRSDGSIQGRGGRAGGSGA). Residues 20 to 30 (QGRGGRAGGSG) are compositionally biased toward gly residues. PPR repeat units follow at residues 86–120 (DLCT…GFRV), 121–156 (DAIA…GCIP), 157–194 (NVFS…GSPP), 195–229 (DVVS…GILP), 230–264 (DVVT…GVMP), 265–299 (DCMT…GVEP), 300–334 (DVVT…GLKP), 335–369 (EITT…GIHP), 370–404 (DHYV…GLNP), 405–439 (NAVT…GLSP), 440–474 (GNIV…GICL), 475–509 (NTIF…GVKP), 510–544 (NVIT…GLKP), 545–579 (NTVT…GVSP), 580–614 (DIIT…GTQI), 615–649 (ELST…DLKL), 650–684 (EART…GLVP), 685–719 (NYWT…GCTV), and 720–754 (DSGM…HFSL).

Its subcellular location is the mitochondrion. In terms of biological role, reduces the expression of the cytoplasmic male sterility (CMS)-associated mitochondrial gene ORF79, encoding a cytotoxic peptide. Can restore male fertility by blocking ORF79 production via endonucleolytic cleavage of dicistronic ATP6/ORF79 mRNA. Promotes the editing of ATP6 mRNAs independently of its cleavage function. This chain is Protein Rf1, mitochondrial (Rf1), found in Oryza sativa subsp. indica (Rice).